The chain runs to 187 residues: Putative manganese efflux pump MntP (187 aa).

A run of 6 helical transmembrane segments spans residues 3 to 23 (LSAT…ASIG), 41 to 61 (LIFG…GLLA), 62 to 82 (TQFV…FLGG), 106 to 128 (LLVT…LAFL), 142 to 162 (ATLI…PLLG), and 167 to 187 (ILGG…HFAG).

The protein belongs to the MntP (TC 9.B.29) family.

The protein resides in the cell inner membrane. Its function is as follows. Probably functions as a manganese efflux pump. This is Putative manganese efflux pump MntP from Cronobacter sakazakii (strain ATCC BAA-894) (Enterobacter sakazakii).